We begin with the raw amino-acid sequence, 147 residues long: Truncated RecQ DNA helicase-like protein C212.06c (147 aa).

Positions 1–72 constitute a Helicase C-terminal domain; that stretch reads MGVRLVVHYR…CVRSFLASEM (72 aa). The disordered stretch occupies residues 100-147; that stretch reads ETPKPAIATHSRYNASFSSSPPPQPGSSSGMSAMNTNTTSTTPVSGKT. Low complexity predominate over residues 125–141; sequence GSSSGMSAMNTNTTSTT.

It belongs to the helicase family. RecQ subfamily.

Functionally, truncated ATP-dependent 3'-5' DNA helicase. The protein is Truncated RecQ DNA helicase-like protein C212.06c of Schizosaccharomyces pombe (strain 972 / ATCC 24843) (Fission yeast).